The following is a 917-amino-acid chain: Protein translocase subunit SecA (917 aa).

Residues Gln87, Gly105–Thr109, and Asp516 each bind ATP. Positions 901, 903, 912, and 913 each coordinate Zn(2+).

This sequence belongs to the SecA family. In terms of assembly, monomer and homodimer. Part of the essential Sec protein translocation apparatus which comprises SecA, SecYEG and auxiliary proteins SecDF-YajC and YidC. It depends on Zn(2+) as a cofactor.

It is found in the cell inner membrane. The protein localises to the cytoplasm. The enzyme catalyses ATP + H2O + cellular proteinSide 1 = ADP + phosphate + cellular proteinSide 2.. In terms of biological role, part of the Sec protein translocase complex. Interacts with the SecYEG preprotein conducting channel. Has a central role in coupling the hydrolysis of ATP to the transfer of proteins into and across the cell membrane, serving both as a receptor for the preprotein-SecB complex and as an ATP-driven molecular motor driving the stepwise translocation of polypeptide chains across the membrane. This Verminephrobacter eiseniae (strain EF01-2) protein is Protein translocase subunit SecA.